A 291-amino-acid polypeptide reads, in one-letter code: Light-independent protochlorophyllide reductase iron-sulfur ATP-binding protein (291 aa).

Residues 10–15 (GIGKST) and K39 each bind ATP. Residue S14 participates in Mg(2+) binding. Positions 95 and 129 each coordinate [4Fe-4S] cluster. 180–181 (NR) is an ATP binding site.

It belongs to the NifH/BchL/ChlL family. In terms of assembly, homodimer. Protochlorophyllide reductase is composed of three subunits; ChlL, ChlN and ChlB. It depends on [4Fe-4S] cluster as a cofactor.

It is found in the plastid. The protein resides in the chloroplast. The enzyme catalyses chlorophyllide a + oxidized 2[4Fe-4S]-[ferredoxin] + 2 ADP + 2 phosphate = protochlorophyllide a + reduced 2[4Fe-4S]-[ferredoxin] + 2 ATP + 2 H2O. It participates in porphyrin-containing compound metabolism; chlorophyll biosynthesis (light-independent). Component of the dark-operative protochlorophyllide reductase (DPOR) that uses Mg-ATP and reduced ferredoxin to reduce ring D of protochlorophyllide (Pchlide) to form chlorophyllide a (Chlide). This reaction is light-independent. The L component serves as a unique electron donor to the NB-component of the complex, and binds Mg-ATP. The chain is Light-independent protochlorophyllide reductase iron-sulfur ATP-binding protein from Pinus thunbergii (Japanese black pine).